The following is a 950-amino-acid chain: Coiled-coil domain-containing protein 80 (950 aa).

The N-terminal stretch at 1-21 (MTWRMGPRFTMLLAMWLVCGS) is a signal peptide. Disordered regions lie at residues 28–64 (TIRG…IERS), 88–119 (PTEP…EMIR), and 289–609 (QVVA…QSPK). Basic and acidic residues-rich tracts occupy residues 104-119 (PEQR…EMIR) and 308-317 (SEKKKEDPRR). The span at 348-374 (PRATTLPPAPATTVTRSTSRAVTVAAR) shows a compositional bias: low complexity. A compositionally biased stretch (polar residues) spans 376–385 (MTTTAFPTTQ). Positions 418–428 (SRKDQHRERPQ) are enriched in basic and acidic residues. Residues 435 to 454 (KATSLESFTNAPPTTISEPS) are compositionally biased toward polar residues. Basic and acidic residues-rich tracts occupy residues 462–478 (RFRD…HRDP), 487–499 (PAKE…KAQD), and 538–582 (KKHE…EKEK). Glycyl lysine isopeptide (Lys-Gly) (interchain with G-Cter in SUMO2) cross-links involve residues Lys545 and Lys548. Residues 560 to 587 (DKLLKSEKQMKKSEKKSKQEKEKSKKKK) are a coiled coil. The span at 598–609 (KPTNKHFTQSPK) shows a compositional bias: polar residues.

The protein belongs to the CCDC80 family. As to quaternary structure, binds to various extracellular matrix proteins. Phosphorylated. Expressed in dermal papilla and dermal fibroblasts (at protein level). Expressed in heart, thymus, placenta, pancreas, colon, epithelium, spleen and osteoblasts.

It is found in the secreted. The protein localises to the extracellular space. Its subcellular location is the extracellular matrix. Functionally, promotes cell adhesion and matrix assembly. The chain is Coiled-coil domain-containing protein 80 (CCDC80) from Homo sapiens (Human).